Consider the following 187-residue polypeptide: 1,6-anhydro-N-acetylmuramyl-L-alanine amidase AmpD (187 aa).

The region spanning 29–167 (SLLVVHNISL…TPDRKTDPGP (139 aa)) is the N-acetylmuramoyl-L-alanine amidase domain. His34 lines the Zn(2+) pocket. The active-site Proton acceptor is the Glu116. Residues His154 and Asp164 each coordinate Zn(2+).

Belongs to the N-acetylmuramoyl-L-alanine amidase 2 family. Requires Zn(2+) as cofactor.

Its subcellular location is the cytoplasm. The enzyme catalyses Hydrolyzes the link between N-acetylmuramoyl residues and L-amino acid residues in certain cell-wall glycopeptides.. Its function is as follows. Involved in cell wall peptidoglycan recycling. Specifically cleaves the amide bond between the lactyl group of N-acetylmuramic acid and the alpha-amino group of the L-alanine in degradation products containing an anhydro N-acetylmuramyl moiety. The chain is 1,6-anhydro-N-acetylmuramyl-L-alanine amidase AmpD (ampD) from Salmonella typhimurium (strain LT2 / SGSC1412 / ATCC 700720).